The sequence spans 410 residues: Transcription factor PHYTOCHROME INTERACTING FACTOR-LIKE 13 (410 aa).

The span at 82–92 (AAAAAGPSSHH) shows a compositional bias: low complexity. Disordered regions lie at residues 82-110 (AAAAAGPSSHHAPPPDLPPPAARPPMRSG) and 137-225 (CRDA…AEVH). Positions 93–104 (APPPDLPPPAAR) are enriched in pro residues. Residues 187 to 197 (GREDSDSRSED) show a composition bias toward basic and acidic residues. The span at 209-219 (SSRRYGSKRRT) shows a compositional bias: basic residues. The basic motif stretch occupies residues 220 to 233 (RAAEVHNLSERRRR). In terms of domain architecture, bHLH spans 220–269 (RAAEVHNLSERRRRDRINEKMRALQELIPHCNKTDKASILDEAIEYLKSL). Residues 234–269 (DRINEKMRALQELIPHCNKTDKASILDEAIEYLKSL) form a helix-loop-helix motif region. A disordered region spans residues 357–410 (PFLHPDGWQTVPPQVSGPYASGPQVAQQNQIPKASASTVLPNSGAEQPPTSDGI). Residues 380 to 410 (QVAQQNQIPKASASTVLPNSGAEQPPTSDGI) are compositionally biased toward polar residues.

It belongs to the bHLH protein family. In terms of assembly, interacts with PRR1. Interacts with LF. Highly expressed in the node portions of the stem. Expressed in the leaves and the basal part of shoots.

Its subcellular location is the nucleus. In terms of biological role, transcription factor that may act as negative regulator of phyB-dependent light signal transduction. Transcription activator that acts as a positive regulator of internode elongation. May function via regulation of cell wall-related genes. May play a role in a drought-associated growth-restriction mechanism in response to drought stress. The chain is Transcription factor PHYTOCHROME INTERACTING FACTOR-LIKE 13 from Oryza sativa subsp. japonica (Rice).